A 241-amino-acid polypeptide reads, in one-letter code: MQRDYTATEVFQESGPDAIVYLHGGAWIDVRNSPRDFAELAARVREDAPLASQYAVTYRLSPEVQHPVHVADCVEHISQLIVEKGIRKLHLLGHSVGATLCWQILTALPGDRRYPEGPDFAMKLALVRSSLAHVFLVDGIYSLRALLEEYPDYDYFVNKAFKSLKDFEDPSESAERISAGPILHVIHSYKDELLTLKQTQYLTAVLTAHQIPYKLYVDDLGLHEDVYRNEKVAAYIVAQLP.

Residues 23 to 27 (HGGAW) carry the HGGXW motif. Serine 95 serves as the catalytic Nucleophile. Catalysis depends on residues aspartate 191 and histidine 223.

It belongs to the kynurenine formamidase family. In terms of assembly, homodimer.

The enzyme catalyses N-formyl-L-kynurenine + H2O = L-kynurenine + formate + H(+). It participates in amino-acid degradation; L-tryptophan degradation via kynurenine pathway; L-kynurenine from L-tryptophan: step 2/2. Functionally, catalyzes the hydrolysis of N-formyl-L-kynurenine to L-kynurenine, the second step in the kynurenine pathway of tryptophan degradation. Kynurenine may be further oxidized to nicotinic acid, NAD(H) and NADP(H). Required for elimination of toxic metabolites. The chain is Kynurenine formamidase from Eremothecium gossypii (strain ATCC 10895 / CBS 109.51 / FGSC 9923 / NRRL Y-1056) (Yeast).